The sequence spans 752 residues: Complement C2 (752 aa).

A signal peptide spans 1 to 20 (MGPLMVLFCLLFLYPGLADS). Sushi domains lie at 22-86 (PSCP…VCKP), 87-146 (VRCP…VCDN), and 149-206 (GHCP…ICRQ). 6 disulfide bridges follow: cysteine 24/cysteine 64, cysteine 51/cysteine 84, cysteine 89/cysteine 131, cysteine 117/cysteine 144, cysteine 151/cysteine 191, and cysteine 177/cysteine 204. N-linked (GlcNAc...) asparagine glycosylation occurs at asparagine 29. Asparagine 112 carries an N-linked (GlcNAc...) asparagine glycan. Residues 254 to 452 (NLYLLLDCSQ…KALHQVFEHM (199 aa)) form the VWFA domain. Residues 260 to 264 (DCSQS) carry the MIDAS-like motif motif. Residues serine 262 and serine 264 each contribute to the Mg(2+) site. Mn(2+)-binding residues include serine 262 and serine 264. Asparagine 290 and asparagine 333 each carry an N-linked (GlcNAc...) asparagine glycan. Threonine 337 is a Mg(2+) binding site. Mn(2+) is bound at residue threonine 337. Intrachain disulfides connect cysteine 463-cysteine 581, cysteine 492-cysteine 508, and cysteine 584-cysteine 600. The Peptidase S1 domain occupies 464 to 744 (GVGNMSANAS…MQPWLRQHLG (281 aa)). N-linked (GlcNAc...) asparagine glycans are attached at residues asparagine 467 and asparagine 471. Active-site charge relay system residues include histidine 507 and aspartate 561. An N-linked (GlcNAc...) asparagine glycan is attached at asparagine 621. Intrachain disulfides connect cysteine 638/cysteine 665 and cysteine 675/cysteine 705. Asparagine 651 carries N-linked (GlcNAc...) (complex) asparagine glycosylation. The active-site Charge relay system is serine 679.

It belongs to the peptidase S1 family. In terms of assembly, serine protease component of the C3 convertase, also named C4bC2b, composed of the serine protease complement C2b and complement C4b. Serine protease component of the C5 convertase, also named C4bC2bC3b, composed of the serine protease complement C2b, complement C3b, as well as complement C4b. As to quaternary structure, (Microbial infection) Interacts with Schistosoma haematobium TOR (via N-terminal extracellular domain). This results in inhibition of the classical and lectin pathway of complement activation, probably due to interference with binding of C2a to C4b such that C3 convertase cannot be formed. This infers resistance to complement-mediated cell lysis, allowing parasite survival and infection. Requires Mg(2+) as cofactor. Mn(2+) serves as cofactor. In terms of processing, cleaved and activated by different proteases depending on the complement pathway to generate complement C2a and serine protease complement C2b chains. Cleaved and activated by C1S following activation by the classical complement system. Cleaved and activated by MASP2 following activation by the lectin complement system. Cleaved and activated by GZMK following activation by the GZMK complement system.

Its subcellular location is the secreted. It is found in the cell surface. The enzyme catalyses Selective cleavage of Arg-|-Ser bond in complement component C3 alpha-chain to form C3a and C3b, and Arg-|-Xaa bond in complement component C5 alpha-chain to form C5a and C5b.. Precursor of the catalytic component of the C3 and C5 convertase complexes, which are part of the complement pathway, a cascade of proteins that leads to phagocytosis and breakdown of pathogens and signaling that strengthens the adaptive immune system. Component C2 is part of the classical, lectin and GZMK complement systems. In terms of biological role, catalytic component of the complement C3 and C5 convertase complexes. Following complement activation, recruited to the surface of pathogens by complement C4b opsonin to form the C3 convertase, or C3b and C4b opsonins to form the C5 convertase. As part of the C3 convertase, cleaves and activate C3 into C3a anaphylatoxin and C3b opsonin, the next components of the complement pathways. As part of the C5 convertase, cleaves and activate C5 into C5a anaphylatoxin and C5b component of the membrane attack complex. This chain is Complement C2, found in Homo sapiens (Human).